Reading from the N-terminus, the 317-residue chain is Ribosomal RNA small subunit methyltransferase H (317 aa).

S-adenosyl-L-methionine is bound by residues 36–38 (GGH), aspartate 56, phenylalanine 80, aspartate 102, and glutamine 109.

It belongs to the methyltransferase superfamily. RsmH family.

The protein localises to the cytoplasm. The catalysed reaction is cytidine(1402) in 16S rRNA + S-adenosyl-L-methionine = N(4)-methylcytidine(1402) in 16S rRNA + S-adenosyl-L-homocysteine + H(+). In terms of biological role, specifically methylates the N4 position of cytidine in position 1402 (C1402) of 16S rRNA. In Baumannia cicadellinicola subsp. Homalodisca coagulata, this protein is Ribosomal RNA small subunit methyltransferase H.